We begin with the raw amino-acid sequence, 242 residues long: uncharacterized protein (242 aa).

An N-terminal signal peptide occupies residues methionine 1 to alanine 20.

This sequence belongs to the periplasmic pilus chaperone family.

It is found in the periplasm. Its function is as follows. Could be required for the biogenesis of the putative YbgD fimbria. This is an uncharacterized protein from Escherichia coli (strain K12).